Here is a 103-residue protein sequence, read N- to C-terminus: Phosphoribosyl-ATP pyrophosphatase (103 aa).

Belongs to the PRA-PH family.

Its subcellular location is the cytoplasm. The enzyme catalyses 1-(5-phospho-beta-D-ribosyl)-ATP + H2O = 1-(5-phospho-beta-D-ribosyl)-5'-AMP + diphosphate + H(+). The protein operates within amino-acid biosynthesis; L-histidine biosynthesis; L-histidine from 5-phospho-alpha-D-ribose 1-diphosphate: step 2/9. The protein is Phosphoribosyl-ATP pyrophosphatase of Cereibacter sphaeroides (strain ATCC 17025 / ATH 2.4.3) (Rhodobacter sphaeroides).